The chain runs to 258 residues: Imidazole glycerol phosphate synthase subunit HisF (258 aa).

Catalysis depends on residues aspartate 11 and aspartate 130.

The protein belongs to the HisA/HisF family. As to quaternary structure, heterodimer of HisH and HisF.

The protein resides in the cytoplasm. It catalyses the reaction 5-[(5-phospho-1-deoxy-D-ribulos-1-ylimino)methylamino]-1-(5-phospho-beta-D-ribosyl)imidazole-4-carboxamide + L-glutamine = D-erythro-1-(imidazol-4-yl)glycerol 3-phosphate + 5-amino-1-(5-phospho-beta-D-ribosyl)imidazole-4-carboxamide + L-glutamate + H(+). Its pathway is amino-acid biosynthesis; L-histidine biosynthesis; L-histidine from 5-phospho-alpha-D-ribose 1-diphosphate: step 5/9. In terms of biological role, IGPS catalyzes the conversion of PRFAR and glutamine to IGP, AICAR and glutamate. The HisF subunit catalyzes the cyclization activity that produces IGP and AICAR from PRFAR using the ammonia provided by the HisH subunit. The sequence is that of Imidazole glycerol phosphate synthase subunit HisF from Shigella boydii serotype 18 (strain CDC 3083-94 / BS512).